The chain runs to 460 residues: Baeyer-Villiger oxidase AgnL3 (460 aa).

Belongs to the questin oxidase family. It depends on NADPH as a cofactor.

It functions in the pathway secondary metabolite biosynthesis. Functionally, baeyer-Villiger oxidase; part of the gene cluster that mediates the biosynthesis of agnestins, dihydroxy-xanthone metabolites. The pathway begins with the assembly and cyclization of atrochrysone thioester by the non-reducing polyketide synthase Agnpks1. The atrochrysone carboxyl ACP thioesterase AgnL7 then breaks the thioester bond and releases the atrochrysone carboxylic acid as the first enzyme-free intermediate. The decarboxylase AgnL1 then catalyzes the concerted decarboxylation-elimination required to convert atochrysone carboxylic acid into emodin anthrone, which is further oxidized to emodin by the anthrone oxygenase AgnL2. Emodin then undergoes reduction catalyzed by the oxidoreductase AgnL4 to yield the dihydroquinone tautomer which is the substrate for reduction by the short chain dehydrogenase AgnL6 reduction to produce hydroxyketone, followed by AgnL8 dehydration and likely spontaneous autoxidation to chrysophanol. Baeyer-Villiger oxidation by the oxidase AgnL3 leads to monodictyphenone via cleavage of the C-10/C-10a bond of chrysophanol. Alternative cleavage at the C-4a/C-10 bond of chrysophanol also leads to the formation some cephalone F. Further conversion to agnestins A and B, requires reduction to dihydro-monodictyphenone, oxidation to agnestin C probably via an epoxide, and rearrangement to either agnestin A or agnestin B directly, although agnestin A or agnestin B can also interconvert. Within the cluster, AgnR1 is the only unassigned oxidoreductase present which could be involved in this conversion. However, AgnR1 seems not to be involved in this step, and thus genes involved in the proposed oxidation/reduction may be located elsewhere on the genome. Further agnestin A derivatives are probably formed by spontaneous decarboxylations, dehydrations and methanolysis reactions. This chain is Baeyer-Villiger oxidase AgnL3, found in Paecilomyces divaricatus (Penicillium divaricatum).